The sequence spans 193 residues: Chlorate reductase assembly chaperone protein (193 aa).

The protein belongs to the type II DMSO reductase enzyme chaperone family.

It localises to the cytoplasm. Functionally, may function as a system-specific chaperone protein essential for the assembly of an active chlorate reductase ClrABC. This Ideonella dechloratans protein is Chlorate reductase assembly chaperone protein (clrD).